Consider the following 275-residue polypeptide: Large ribosomal subunit protein uL2c (275 aa).

Positions 222–258 (GSAMNPVDHPHGGGEGRAPIGRARPVSPWGRPALGAK) are disordered.

The protein belongs to the universal ribosomal protein uL2 family. In terms of assembly, part of the 50S ribosomal subunit.

It localises to the plastid. The protein resides in the chloroplast. This Chlorella vulgaris (Green alga) protein is Large ribosomal subunit protein uL2c (rpl2).